The following is a 291-amino-acid chain: Lipoyl synthase, organellar chromatophore (291 aa).

[4Fe-4S] cluster is bound by residues C33, C38, C44, C59, C63, C66, and S274. Residues 45–263 enclose the Radical SAM core domain; it reads FAGGTATFLI…AIGELEMNFL (219 aa).

The protein belongs to the radical SAM superfamily. Lipoyl synthase family. The cofactor is [4Fe-4S] cluster.

The protein localises to the plastid. Its subcellular location is the organellar chromatophore. The enzyme catalyses [[Fe-S] cluster scaffold protein carrying a second [4Fe-4S](2+) cluster] + N(6)-octanoyl-L-lysyl-[protein] + 2 oxidized [2Fe-2S]-[ferredoxin] + 2 S-adenosyl-L-methionine + 4 H(+) = [[Fe-S] cluster scaffold protein] + N(6)-[(R)-dihydrolipoyl]-L-lysyl-[protein] + 4 Fe(3+) + 2 hydrogen sulfide + 2 5'-deoxyadenosine + 2 L-methionine + 2 reduced [2Fe-2S]-[ferredoxin]. It participates in protein modification; protein lipoylation via endogenous pathway; protein N(6)-(lipoyl)lysine from octanoyl-[acyl-carrier-protein]: step 2/2. In terms of biological role, catalyzes the radical-mediated insertion of two sulfur atoms into the C-6 and C-8 positions of the octanoyl moiety bound to the lipoyl domains of lipoate-dependent enzymes, thereby converting the octanoylated domains into lipoylated derivatives. The protein is Lipoyl synthase, organellar chromatophore of Paulinella chromatophora.